The sequence spans 33 residues: Fatty acid-binding protein, intestinal (33 aa).

Belongs to the calycin superfamily. Fatty-acid binding protein (FABP) family. In terms of tissue distribution, intestine.

The protein localises to the cytoplasm. Functionally, FABPs are thought to play a role in the intracellular transport of long-chain fatty acids and their acyl-CoA esters. In Rhamdia sapo (South American catfish), this protein is Fatty acid-binding protein, intestinal (fabp2).